Consider the following 289-residue polypeptide: Xylosylprotein 4-beta-galactosyltransferase (289 aa).

The Cytoplasmic portion of the chain corresponds to 1–6 (MKLKTR). A helical; Signal-anchor for type II membrane protein membrane pass occupies residues 7-27 (LILSGTILISLAACYFLVLLV). The Lumenal segment spans residues 28–289 (LDLEITRDLM…DLNWTPYCKS (262 aa)). 58 to 62 (PYRDR) contributes to the UDP-alpha-D-galactose binding site. Asn-81 and Asn-90 each carry an N-linked (GlcNAc...) asparagine glycan. UDP-alpha-D-galactose-binding positions include 97-99 (FNR), 123-124 (VD), Tyr-154, and Trp-184. Asp-124 contributes to the Mn(2+) binding site. 186 to 189 (LEDD) contributes to the N-acetyl-D-glucosamine binding site. The N-linked (GlcNAc...) asparagine glycan is linked to Asn-201. The interval 214–236 (NTFRHIHGPKRKRDYTPKKNDKN) is disordered. Residues 217–226 (RHIHGPKRKR) are compositionally biased toward basic residues. Mn(2+) is bound at residue His-218. 218–220 (HIH) is a binding site for UDP-alpha-D-galactose. A compositionally biased stretch (basic and acidic residues) spans 227-236 (DYTPKKNDKN).

The protein belongs to the glycosyltransferase 7 family. It depends on Mn(2+) as a cofactor.

The protein localises to the membrane. The enzyme catalyses 3-O-(beta-D-xylosyl)-L-seryl-[protein] + UDP-alpha-D-galactose = 3-O-(beta-D-galactosyl-(1-&gt;4)-beta-D-xylosyl)-L-seryl-[protein] + UDP + H(+). It functions in the pathway protein modification; protein glycosylation. Its function is as follows. Glycosyltransferase required for the biosynthesis of the tetrasaccharide (GlcA-Gal-Gal-Xyl-)Ser core linker of heparan sulfate and chondroitin sulfate. Required for embryonic development. Involved in vulval epithelium invagination. Required for axon regeneration after injury. This Caenorhabditis elegans protein is Xylosylprotein 4-beta-galactosyltransferase (sqv-3).